The primary structure comprises 233 residues: Large ribosomal subunit protein uL1 (233 aa).

It belongs to the universal ribosomal protein uL1 family. As to quaternary structure, part of the 50S ribosomal subunit.

Binds directly to 23S rRNA. The L1 stalk is quite mobile in the ribosome, and is involved in E site tRNA release. In terms of biological role, protein L1 is also a translational repressor protein, it controls the translation of the L11 operon by binding to its mRNA. This Polynucleobacter asymbioticus (strain DSM 18221 / CIP 109841 / QLW-P1DMWA-1) (Polynucleobacter necessarius subsp. asymbioticus) protein is Large ribosomal subunit protein uL1.